The chain runs to 112 residues: Cell cycle protein GpsB (112 aa).

Residues 42 to 77 are a coiled coil; it reads YQKMADMNNEVVKLSEENNKLKKEVEELRLRVATSR. A disordered region spans residues 75 to 97; that stretch reads TSRPSDNKSFSSNNSSSSNNNVD. The span at 81-95 shows a compositional bias: low complexity; sequence NKSFSSNNSSSSNNN.

Belongs to the GpsB family. Forms polymers through the coiled coil domains. Interacts with PBP1, MreC and EzrA.

The protein localises to the cytoplasm. In terms of biological role, divisome component that associates with the complex late in its assembly, after the Z-ring is formed, and is dependent on DivIC and PBP2B for its recruitment to the divisome. Together with EzrA, is a key component of the system that regulates PBP1 localization during cell cycle progression. Its main role could be the removal of PBP1 from the cell pole after pole maturation is completed. Also contributes to the recruitment of PBP1 to the division complex. Not essential for septum formation. The chain is Cell cycle protein GpsB from Staphylococcus haemolyticus (strain JCSC1435).